We begin with the raw amino-acid sequence, 215 residues long: Octanoyltransferase (215 aa).

The 176-residue stretch at 31–206 (PDSQDEIWLV…QLVKHLDYAE (176 aa)) folds into the BPL/LPL catalytic domain. Residues 70 to 77 (RGGQVTYH), 137 to 139 (SLG), and 150 to 152 (GLA) contribute to the substrate site. The active-site Acyl-thioester intermediate is the Cys-168.

It belongs to the LipB family.

It localises to the cytoplasm. The enzyme catalyses octanoyl-[ACP] + L-lysyl-[protein] = N(6)-octanoyl-L-lysyl-[protein] + holo-[ACP] + H(+). Its pathway is protein modification; protein lipoylation via endogenous pathway; protein N(6)-(lipoyl)lysine from octanoyl-[acyl-carrier-protein]: step 1/2. In terms of biological role, catalyzes the transfer of endogenously produced octanoic acid from octanoyl-acyl-carrier-protein onto the lipoyl domains of lipoate-dependent enzymes. Lipoyl-ACP can also act as a substrate although octanoyl-ACP is likely to be the physiological substrate. The protein is Octanoyltransferase of Pseudomonas putida (strain W619).